A 207-amino-acid polypeptide reads, in one-letter code: Ribosomal RNA small subunit methyltransferase G (207 aa).

Residues G76, Q81, 127–128 (VE), and R141 each bind S-adenosyl-L-methionine.

The protein belongs to the methyltransferase superfamily. RNA methyltransferase RsmG family.

The protein localises to the cytoplasm. It carries out the reaction guanosine(527) in 16S rRNA + S-adenosyl-L-methionine = N(7)-methylguanosine(527) in 16S rRNA + S-adenosyl-L-homocysteine. Its function is as follows. Specifically methylates the N7 position of guanine in position 527 of 16S rRNA. The polypeptide is Ribosomal RNA small subunit methyltransferase G (Neisseria meningitidis serogroup B (strain ATCC BAA-335 / MC58)).